We begin with the raw amino-acid sequence, 159 residues long: MNISIISVGKIKEKFLKAAIDEYSKRLSKYCKLNIIEVTDEKTPDNASLKEENIIKEKEGNLILKHIKDNSFVIALDLKGKAITSEEFSDLIENCRLTGNSTIAFVIGGSLGLSEQVLSRANYKLSFSKMTFPHQLFRVMLLEQVYRAFRILCGEPYHK.

S-adenosyl-L-methionine-binding positions include leucine 76, glycine 108, and 127-132; that span reads FSKMTF.

This sequence belongs to the RNA methyltransferase RlmH family. In terms of assembly, homodimer.

It is found in the cytoplasm. The catalysed reaction is pseudouridine(1915) in 23S rRNA + S-adenosyl-L-methionine = N(3)-methylpseudouridine(1915) in 23S rRNA + S-adenosyl-L-homocysteine + H(+). Specifically methylates the pseudouridine at position 1915 (m3Psi1915) in 23S rRNA. In Clostridium botulinum (strain Okra / Type B1), this protein is Ribosomal RNA large subunit methyltransferase H.